We begin with the raw amino-acid sequence, 346 residues long: 2-oxoglutarate synthase subunit KorA (346 aa).

Heterotetramer of the KorA, KorB, KorC and KorD subunits.

It carries out the reaction 2 oxidized [2Fe-2S]-[ferredoxin] + 2-oxoglutarate + CoA = succinyl-CoA + 2 reduced [2Fe-2S]-[ferredoxin] + CO2 + H(+). The sequence is that of 2-oxoglutarate synthase subunit KorA (korA) from Archaeoglobus fulgidus (strain ATCC 49558 / DSM 4304 / JCM 9628 / NBRC 100126 / VC-16).